Reading from the N-terminus, the 81-residue chain is Cell division protein ZapB (81 aa).

A coiled-coil region spans residues 5 to 81; it reads LEVFEKLESK…QALLGRMEEV (77 aa). Residues 43-64 form a disordered region; that stretch reads VHSAQNGREELERENQQLREQQ. The segment covering 49–59 has biased composition (basic and acidic residues); sequence GREELERENQQ.

This sequence belongs to the ZapB family. As to quaternary structure, homodimer. The ends of the coiled-coil dimer bind to each other, forming polymers. Interacts with FtsZ.

The protein resides in the cytoplasm. Non-essential, abundant cell division factor that is required for proper Z-ring formation. It is recruited early to the divisome by direct interaction with FtsZ, stimulating Z-ring assembly and thereby promoting cell division earlier in the cell cycle. Its recruitment to the Z-ring requires functional FtsA or ZipA. This Enterobacter sp. (strain 638) protein is Cell division protein ZapB.